The chain runs to 519 residues: UPF0053 protein bbp_300 (519 aa).

The next 7 helical transmembrane spans lie at 13–35 (LLTL…AILS), 48–70 (LIGL…WMVT), 80–102 (YFSF…FKAT), 123–145 (AGFW…DAII), 150–172 (TINN…LIAS), 185–207 (VVVL…ALGF), and 212–231 (GYLY…NQIA). CBS domains are found at residues 311-373 (MTPR…IIDF) and 374-434 (SSTT…DADE).

Belongs to the UPF0053 family.

Its subcellular location is the cell membrane. The polypeptide is UPF0053 protein bbp_300 (Buchnera aphidicola subsp. Baizongia pistaciae (strain Bp)).